We begin with the raw amino-acid sequence, 261 residues long: High-affinity zinc uptake system membrane protein ZnuB (261 aa).

Transmembrane regions (helical) follow at residues 8-28, 54-74, 84-104, 129-149, 179-199, 215-235, and 238-254; these read GWLAGILLSFATGPLGSFIIW, IDSFYTELFFMSFLAIILVWM, TILSIISHSSLSLGIICISLM, CIIALGSLIVLTILFFRWNSI, ICISIAIKFVGVLLITSLLII, IGFSILISIISVTGGIFLSFF, and VPTSPSIVLFSSCVYLL.

Belongs to the ABC-3 integral membrane protein family.

Its subcellular location is the cell membrane. Its function is as follows. Involved in the high-affinity zinc uptake transport system. The chain is High-affinity zinc uptake system membrane protein ZnuB (znuB) from Buchnera aphidicola subsp. Schizaphis graminum (strain Sg).